Here is a 686-residue protein sequence, read N- to C-terminus: Myb-related protein B (686 aa).

Residues 1 to 28 are disordered; that stretch reads MARRSRGEDQDELHCQDTDSDVPEQRDG. HTH myb-type domains are found at residues 26–77, 78–133, and 134–184; these read RDGR…LRVL, NPDL…NPEV, and KKSS…KRKV. 3 consecutive DNA-binding regions (H-T-H motif) follow at residues 54-77, 106-129, and 157-180; these read WKFL…LRVL, WTLI…HNHL, and WAEI…NSTI. Disordered regions lie at residues 315-355 and 493-512; these read CDLT…VTEY and YVVD…LEKY. Positions 326–343 are enriched in low complexity; it reads PSAGSSSSSNSPVRQTPS.

Component of the DREAM complex. As to expression, expressed in hematopoietic and non hematopoietic cells.

Its subcellular location is the nucleus. Its function is as follows. Represses v-myb- and c-myb-mediated activation of the mim-1 gene, probably by competing with other myb proteins for binding sites. It is an inhibitory member of the myb family. This chain is Myb-related protein B (MYBL2), found in Gallus gallus (Chicken).